A 467-amino-acid polypeptide reads, in one-letter code: Protein PHOSPHATE STARVATION RESPONSE 3 (467 aa).

Residues 227-266 (MSLPVSSCSDQEDLQDARSPAKVQLSSSRSSSGTASCNKP) form a disordered region. One can recognise an HTH myb-type domain in the interval 262–322 (SCNKPRLRWT…HLQKYRLAKY (61 aa)). Positions 293-318 (PKGVLKLMKVEGLTIYHIKSHLQKYR) form a DNA-binding region, H-T-H motif. A compositionally biased stretch (basic and acidic residues) spans 327–337 (KEDKKQEEKKT). Disordered regions lie at residues 327 to 353 (KEDKKQEEKKTKSVANGNDHAKKKSAQ) and 400 to 467 (RESI…VHDE). A compositionally biased stretch (polar residues) spans 402-412 (SISSMTSTTEG). Composition is skewed to basic and acidic residues over residues 419–428 (PMEKTEDKAE) and 438–467 (RITDTDAECHSKVDNKKTKPQADLEMVHDE).

As to expression, expressed in the root cap and in the exodermis of the root, in the root tip of lateral roots, in the mesophyll cells of the leaf, in pollen, vascular cylinder of the anther and the veins of the lemma, palea and pistils, and in the xylem and phloem regions of large vascular bundles, small vascular bundles and diffuse vascular bundles in node I.

It localises to the nucleus. Transcription factor involved in phosphate starvation signaling. Binds to P1BS, an imperfect palindromic sequence 5'-GNATATNC-3', to promote the expression of inorganic phosphate (Pi) starvation-responsive genes. Functionally redundant with PHR1 and PHR2 in regulating Pi starvation response and Pi homeostasis. This Oryza sativa subsp. japonica (Rice) protein is Protein PHOSPHATE STARVATION RESPONSE 3.